The chain runs to 263 residues: tRNA pseudouridine synthase A (263 aa).

Catalysis depends on Asp51, which acts as the Nucleophile. Tyr106 is a binding site for substrate.

Belongs to the tRNA pseudouridine synthase TruA family.

The catalysed reaction is uridine(38/39/40) in tRNA = pseudouridine(38/39/40) in tRNA. Its function is as follows. Formation of pseudouridine at positions 38, 39 and 40 in the anticodon stem and loop of transfer RNAs. This Pyrococcus abyssi (strain GE5 / Orsay) protein is tRNA pseudouridine synthase A.